The following is a 444-amino-acid chain: Trigger factor (444 aa).

Positions 166–251 (GDQVVIDFKG…VKAVKAPKAA (86 aa)) constitute a PPIase FKBP-type domain.

Belongs to the FKBP-type PPIase family. Tig subfamily.

The protein resides in the cytoplasm. It carries out the reaction [protein]-peptidylproline (omega=180) = [protein]-peptidylproline (omega=0). Involved in protein export. Acts as a chaperone by maintaining the newly synthesized protein in an open conformation. Functions as a peptidyl-prolyl cis-trans isomerase. This chain is Trigger factor, found in Cereibacter sphaeroides (strain KD131 / KCTC 12085) (Rhodobacter sphaeroides).